Here is a 388-residue protein sequence, read N- to C-terminus: LL-diaminopimelate aminotransferase (388 aa).

5 residues coordinate substrate: Tyr-13, Gly-38, Lys-102, Tyr-126, and Asn-176. Residues 101 to 102 (SK), Tyr-126, Asn-176, Tyr-207, and 235 to 237 (SLS) each bind pyridoxal 5'-phosphate. Lys-238 carries the N6-(pyridoxal phosphate)lysine modification. Arg-246 provides a ligand contact to pyridoxal 5'-phosphate. Residue Arg-364 coordinates substrate.

This sequence belongs to the class-I pyridoxal-phosphate-dependent aminotransferase family. LL-diaminopimelate aminotransferase subfamily. In terms of assembly, homodimer. Pyridoxal 5'-phosphate serves as cofactor.

It catalyses the reaction (2S,6S)-2,6-diaminopimelate + 2-oxoglutarate = (S)-2,3,4,5-tetrahydrodipicolinate + L-glutamate + H2O + H(+). The protein operates within amino-acid biosynthesis; L-lysine biosynthesis via DAP pathway; LL-2,6-diaminopimelate from (S)-tetrahydrodipicolinate (aminotransferase route): step 1/1. Its function is as follows. Involved in the synthesis of meso-diaminopimelate (m-DAP or DL-DAP), required for both lysine and peptidoglycan biosynthesis. Catalyzes the direct conversion of tetrahydrodipicolinate to LL-diaminopimelate. This is LL-diaminopimelate aminotransferase from Dehalococcoides mccartyi (strain ATCC BAA-2100 / JCM 16839 / KCTC 5957 / BAV1).